The primary structure comprises 179 residues: Endoribonuclease YbeY (179 aa).

Residues H148, H152, and H158 each contribute to the Zn(2+) site.

The protein belongs to the endoribonuclease YbeY family. The cofactor is Zn(2+).

Its subcellular location is the cytoplasm. In terms of biological role, single strand-specific metallo-endoribonuclease involved in late-stage 70S ribosome quality control and in maturation of the 3' terminus of the 16S rRNA. The chain is Endoribonuclease YbeY from Prochlorococcus marinus (strain MIT 9312).